The primary structure comprises 395 residues: Small ribosomal subunit protein mS31 (395 aa).

Residues 1-65 (MFPRVSTFLP…IQRYFGTNSV (65 aa)) constitute a mitochondrion transit peptide. Disordered stretches follow at residues 70–97 (KDKQ…NTKK) and 175–196 (SELL…DAKR). Residues 183–196 (QHEEESRAQRDAKR) show a composition bias toward basic and acidic residues.

It belongs to the mitochondrion-specific ribosomal protein mS31 family. As to quaternary structure, component of the mitochondrial small ribosomal subunit (mt-SSU). Mature mammalian 55S mitochondrial ribosomes consist of a small (28S) and a large (39S) subunit. The 28S small subunit contains a 12S ribosomal RNA (12S mt-rRNA) and 30 different proteins. The 39S large subunit contains a 16S rRNA (16S mt-rRNA), a copy of mitochondrial valine transfer RNA (mt-tRNA(Val)), which plays an integral structural role, and 52 different proteins.

Its subcellular location is the mitochondrion. This Homo sapiens (Human) protein is Small ribosomal subunit protein mS31 (MRPS31).